Reading from the N-terminus, the 343-residue chain is Fanconi anemia group F protein (343 aa).

As to quaternary structure, belongs to the multisubunit FA complex composed of FANCA, FANCB, FANCC, FANCE, FANCF, FANCG, FANCL/PHF9 and FANCM. In complex with FANCA, FANCG and FANCL, but not with FANCC, nor FANCE, interacts with HES1; this interaction may be essential for the stability and nuclear localization of FA core complex proteins.

Its subcellular location is the nucleus. DNA repair protein that may operate in a postreplication repair or a cell cycle checkpoint function. May be implicated in interstrand DNA cross-link repair and in the maintenance of normal chromosome stability. The protein is Fanconi anemia group F protein of Mus musculus (Mouse).